The following is a 136-amino-acid chain: Large ribosomal subunit protein uL16c (136 aa).

The protein belongs to the universal ribosomal protein uL16 family. In terms of assembly, part of the 50S ribosomal subunit.

The protein resides in the plastid. It is found in the chloroplast. The chain is Large ribosomal subunit protein uL16c from Saccharum hybrid (Sugarcane).